A 417-amino-acid chain; its full sequence is Serine--tRNA ligase (417 aa).

224 to 226 (TSE) contacts L-serine. ATP is bound by residues 255–257 (RRE) and valine 271. Glutamate 278 serves as a coordination point for L-serine. Residue 342-345 (ELTS) coordinates ATP. Residue threonine 377 coordinates L-serine.

The protein belongs to the class-II aminoacyl-tRNA synthetase family. Type-1 seryl-tRNA synthetase subfamily. Homodimer. The tRNA molecule binds across the dimer.

Its subcellular location is the cytoplasm. It carries out the reaction tRNA(Ser) + L-serine + ATP = L-seryl-tRNA(Ser) + AMP + diphosphate + H(+). The catalysed reaction is tRNA(Sec) + L-serine + ATP = L-seryl-tRNA(Sec) + AMP + diphosphate + H(+). Its pathway is aminoacyl-tRNA biosynthesis; selenocysteinyl-tRNA(Sec) biosynthesis; L-seryl-tRNA(Sec) from L-serine and tRNA(Sec): step 1/1. Functionally, catalyzes the attachment of serine to tRNA(Ser). Is also able to aminoacylate tRNA(Sec) with serine, to form the misacylated tRNA L-seryl-tRNA(Sec), which will be further converted into selenocysteinyl-tRNA(Sec). The polypeptide is Serine--tRNA ligase (Mycobacterium leprae (strain TN)).